Consider the following 165-residue polypeptide: SsrA-binding protein (165 aa).

Belongs to the SmpB family.

It is found in the cytoplasm. Required for rescue of stalled ribosomes mediated by trans-translation. Binds to transfer-messenger RNA (tmRNA), required for stable association of tmRNA with ribosomes. tmRNA and SmpB together mimic tRNA shape, replacing the anticodon stem-loop with SmpB. tmRNA is encoded by the ssrA gene; the 2 termini fold to resemble tRNA(Ala) and it encodes a 'tag peptide', a short internal open reading frame. During trans-translation Ala-aminoacylated tmRNA acts like a tRNA, entering the A-site of stalled ribosomes, displacing the stalled mRNA. The ribosome then switches to translate the ORF on the tmRNA; the nascent peptide is terminated with the 'tag peptide' encoded by the tmRNA and targeted for degradation. The ribosome is freed to recommence translation, which seems to be the essential function of trans-translation. The protein is SsrA-binding protein of Parvibaculum lavamentivorans (strain DS-1 / DSM 13023 / NCIMB 13966).